We begin with the raw amino-acid sequence, 809 residues long: H(+)/Cl(-) exchange transporter 7 (809 aa).

Over 1-130 (MANVSKKVSW…TAFRTVEIKR (130 aa)) the chain is Cytoplasmic. Residues Ser-9 and Ser-64 each carry the phosphoserine modification. The next 2 helical transmembrane spans lie at 131–163 (WVIC…YRLV) and 178–201 (FSLL…VAFI). A Selectivity filter part_1 motif is present at residues 207-211 (GSGIP). Residue Ser-208 coordinates chloride. Positions 210–217 (IPQIKCFL) form an intramembrane region, helical. A run of 2 helical transmembrane segments spans residues 227 to 245 (RLKT…VVGG) and 251 to 268 (EGPM…ISQG). Residues 249–253 (GKEGP) carry the Selectivity filter part_2 motif. 2 consecutive intramembrane regions (helical) follow at residues 292–304 (FVSA…VSAA) and 308–316 (PVGGVLFSL). 5 helical membrane-spanning segments follow: residues 326 to 345 (FLTW…LNFV), 379 to 409 (IPIF…FRIR), 414 to 436 (PCLQ…FVLI), 491 to 511 (PMTL…TYGL), and 516 to 539 (GVFI…LSYI). The Selectivity filter part_3 motif lies at 516 to 520 (GVFIP). Phe-518 is a binding site for chloride. Positions 549 to 563 (GKYALMGAAAQLGGI) form an intramembrane region, helical. The segment at residues 564–566 (VRM) is an intramembrane region (note=Loop between two helices). The segment at residues 567–578 (TLSLTVIMMEAT) is an intramembrane region (helical). The note=Loop between two helices intramembrane region spans 579–582 (SSVT). Residues 583-601 (YGFPIMLVLMTAKIVGDVF) traverse the membrane as a helical segment. Residues 602–809 (IEGLYDMHIQ…GLEELSLAQT (208 aa)) lie on the Cytoplasmic side of the membrane. Tyr-606 provides a ligand contact to chloride. 2 consecutive CBS domains span residues 635–699 (MSTP…VFVE) and 745–803 (MNPS…GLEE). Residues 662–664 (HNG) and 787–790 (TRKD) each bind ATP. Residue Ser-805 is modified to Phosphoserine.

Belongs to the chloride channel (TC 2.A.49) family. ClC-7/CLCN7 subfamily. Chloride channel 7 are heteromers of alpha (CLCN7) and beta (OSTM1) subunits.

Its subcellular location is the lysosome membrane. The catalysed reaction is 2 chloride(in) + H(+)(out) = 2 chloride(out) + H(+)(in). Functionally, slowly voltage-gated channel mediating the exchange of chloride ions against protons. Functions as antiporter and contributes to the acidification of the lysosome lumen and may be involved in maintaining lysosomal pH. The CLC channel family contains both chloride channels and proton-coupled anion transporters that exchange chloride or another anion for protons. The presence of conserved gating glutamate residues is typical for family members that function as antiporters. This is H(+)/Cl(-) exchange transporter 7 (CLCN7) from Bos taurus (Bovine).